The primary structure comprises 398 residues: Probable peptidoglycan glycosyltransferase FtsW (398 aa).

Residues 1–25 lie on the Cytoplasmic side of the membrane; the sequence is MCYGGTAMMAFADIKEALTPKPSAQ. A helical membrane pass occupies residues 26–46; sequence LYDVPLLYCMLMLMGVGFVMV. The Periplasmic portion of the chain corresponds to 47-69; sequence TSASMPTADRLFGNIYHFTIRHG. Residues 70–90 traverse the membrane as a helical segment; the sequence is IFLALSFCLFWITTSVPMSWW. Residue K91 is a topological domain, cytoplasmic. A helical membrane pass occupies residues 92–112; it reads KANPYLLLVGLGLLLIVLIVG. Residues 113-120 lie on the Periplasmic side of the membrane; sequence REVNGSTR. The chain crosses the membrane as a helical span at residues 121 to 141; the sequence is WIPIGPFNIQASELAKLFFFS. Residues 142 to 156 lie on the Cytoplasmic side of the membrane; sequence YISGYLVRKRSEVQE. A helical transmembrane segment spans residues 157–177; it reads NIKGFIKPILVFAAYAGLILM. Residues 178–179 lie on the Periplasmic side of the membrane; it reads QP. A helical transmembrane segment spans residues 180-200; sequence DLGTVVVMFVTTVGLLFLAGA. Position 201 (K201) is a topological domain, cytoplasmic. The chain crosses the membrane as a helical span at residues 202 to 222; it reads LWQFFVLILTGVALVIGLIVL. The Periplasmic portion of the chain corresponds to 223–289; that stretch reads EPYRMARVIG…DFIFAVIAEE (67 aa). Residues 290 to 312 form a helical membrane-spanning segment; the sequence is LGFVGVSSILIVLGTLVFRALLI. The Cytoplasmic portion of the chain corresponds to 313–324; sequence GQNALKNGKEYE. Residues 325–345 traverse the membrane as a helical segment; sequence GYLALAIGIWFAFQTMVNVGA. At 346 to 356 the chain is on the periplasmic side; it reads SAGILPTKGLT. The helical transmembrane segment at 357–377 threads the bilayer; it reads LPFISYGGSSLLMMTIAAGIL. The Cytoplasmic portion of the chain corresponds to 378–398; that stretch reads LRVDFETKMATKQATSGGAKR.

The protein belongs to the SEDS family. FtsW subfamily.

It is found in the cell inner membrane. The enzyme catalyses [GlcNAc-(1-&gt;4)-Mur2Ac(oyl-L-Ala-gamma-D-Glu-L-Lys-D-Ala-D-Ala)](n)-di-trans,octa-cis-undecaprenyl diphosphate + beta-D-GlcNAc-(1-&gt;4)-Mur2Ac(oyl-L-Ala-gamma-D-Glu-L-Lys-D-Ala-D-Ala)-di-trans,octa-cis-undecaprenyl diphosphate = [GlcNAc-(1-&gt;4)-Mur2Ac(oyl-L-Ala-gamma-D-Glu-L-Lys-D-Ala-D-Ala)](n+1)-di-trans,octa-cis-undecaprenyl diphosphate + di-trans,octa-cis-undecaprenyl diphosphate + H(+). Its pathway is cell wall biogenesis; peptidoglycan biosynthesis. Peptidoglycan polymerase that is essential for cell division. The protein is Probable peptidoglycan glycosyltransferase FtsW of Pseudoalteromonas translucida (strain TAC 125).